Consider the following 290-residue polypeptide: MDKIIKTISESGAFRAFVLDSTETVRTAQEKHQTQASSTVALGRTLIASQILAANEKGNTKLTVKVLGSSSLGAIITVADTKGNVKGYVQNPGVDIKKTATGEVLVGPFVGNGQFLVITDYGTGNPYNSITPLISGEIGEDLAFYLTESQQTPSAVGLNVLLDEEDKVKVAGGFLVQVLPGAKKEEIARFEKRIQEMPAISTLLESDDHIEALLKAIYGDEAYKRLSEEEIRFQCDCSHERFMNALASLPSSDLQEMKEEDHGAEITCQFCQTTYNFDEKDLEELIRDKS.

2 cysteine pairs are disulfide-bonded: C235-C237 and C268-C271.

Belongs to the HSP33 family. Under oxidizing conditions two disulfide bonds are formed involving the reactive cysteines. Under reducing conditions zinc is bound to the reactive cysteines and the protein is inactive.

Its subcellular location is the cytoplasm. In terms of biological role, redox regulated molecular chaperone. Protects both thermally unfolding and oxidatively damaged proteins from irreversible aggregation. Plays an important role in the bacterial defense system toward oxidative stress. The chain is 33 kDa chaperonin from Streptococcus pneumoniae (strain P1031).